The following is a 1032-amino-acid chain: Reticulon-3 (1032 aa).

Low complexity predominate over residues 1 to 24 (MAEPSAATQSHSISSSSFGAEPSA). The tract at residues 1–61 (MAEPSAATQS…SSSSSQPVSL (61 aa)) is disordered. N-acetylalanine is present on Ala2. The Cytoplasmic segment spans residues 2 to 863 (AEPSAATQSH…KKTGFVFGTT (862 aa)). Ser30 bears the Phosphoserine mark. Residues 32-61 (GACPALGTKSCSSSCADSFVSSSSSQPVSL) show a composition bias toward low complexity. 6 positions are modified to phosphoserine: Ser229, Ser243, Ser246, Ser283, Ser316, and Ser453. Basic and acidic residues predominate over residues 545-568 (CEREEKTSKNFEELVSDSELHQDQ). The segment at 545–617 (CEREEKTSKN…NPKLPSTVSP (73 aa)) is disordered. Over residues 605 to 617 (TTENPKLPSTVSP) the composition is skewed to polar residues. Phosphoserine is present on residues Ser649 and Ser650. Over residues 696–715 (NESGGSEIKDIGSKYSEQSK) the composition is skewed to basic and acidic residues. The disordered stretch occupies residues 696 to 726 (NESGGSEIKDIGSKYSEQSKETNGSEPLGVF). Ser735 carries the phosphoserine modification. In terms of domain architecture, Reticulon spans 844-1032 (VHDLIFWRDV…LPGIAKKKAE (189 aa)). An intramembrane region (helical) is located at residues 864–887 (LIMLLSLAAFSVISVVSYLILALL). Topologically, residues 888–947 (SVTISFRIYKSVIQAVQKSEEGHPFKAYLDVDITLSSEAFHNYMNAAMVHINRALKLIIR) are cytoplasmic. Residues 948–968 (LFLVEDLVDSLKLAVFMWLMT) constitute an intramembrane region (helical). Residues 969-972 (YVGA) are Cytoplasmic-facing. The segment at residues 973–993 (VFNGITLLILAELLIFSVPIV) is an intramembrane region (helical). Positions 987-1032 (IFSVPIVYEKYKTQIDHYVGIARDQTKSIVEKIQAKLPGIAKKKAE) are interaction with FADD. Residues 994–1032 (YEKYKTQIDHYVGIARDQTKSIVEKIQAKLPGIAKKKAE) lie on the Cytoplasmic side of the membrane. Residues 1000-1002 (QID) are interaction with BACE1.

Homodimer. Interacts with ATL1. Interacts with RTN4. Isoform 3 interacts with BACE1, BACE2, BCL2 and FADD. Interacts with ATL2. Interacts with TMEM33. Interacts with ZFYVE27 and with KIF5A in a ZFYVE27-dependent manner. Interacts with RIGI. Interacts with TRIM25. As to quaternary structure, (Microbial infection) Interacts with Coxsackievirus A16, enterovirus 71 and poliovirus P2C proteins. In terms of assembly, (Microbial infection) Interacts with West Nile virus protein NS4A. In terms of tissue distribution, isoform 3 is widely expressed, with highest levels in brain, where it is enriched in neuronal cell bodies from gray matter (at protein level). Three times more abundant in macula than in peripheral retina. Isoform 1 is expressed at high levels in brain and at low levels in skeletal muscle. Isoform 2 is only found in melanoma.

The protein resides in the endoplasmic reticulum membrane. The protein localises to the golgi apparatus membrane. May be involved in membrane trafficking in the early secretory pathway. Inhibits BACE1 activity and amyloid precursor protein processing. May induce caspase-8 cascade and apoptosis. May favor BCL2 translocation to the mitochondria upon endoplasmic reticulum stress. Induces the formation of endoplasmic reticulum tubules. Also acts as an inflammation-resolving regulator by interacting with both TRIM25 and RIGI, subsequently impairing RIGI 'Lys-63'-linked polyubiquitination leading to IRF3 and NF-kappa-B inhibition. Functionally, (Microbial infection) Plays a positive role in viral replication and pathogenesis of enteroviruses. The chain is Reticulon-3 (RTN3) from Homo sapiens (Human).